The following is a 412-amino-acid chain: MKAISVLGSTGSIGTQTLQIAEEFPDQFKIVALTAGKNLDLVTKQIETHQPEVVSLADESLLPELTRRINSLNEDSKILKKPLLMAGAEGLNTAAAWGSADLVVTGIVGCAGLLPTLAAIEAGKDLALANKETLIAAGPVVIPALKKSGSRLLPADSEHSAIFQCLQGTPWADNARLSTGVPTPGFKSIQLTASGGAFRDWKAEDLVKATVEDATSHPNWSMGKKITVDSATLMNKGLEVIEAHYLFGLSYDQIEIIIHPQSIIHSMVELDDSSVLAQLGWPDMKLPILYCLSWPSRLKTPWPRLKLTQIGNLTFKEPDTNKYPCMELAYSAGKSGGTMPAVLNAANEKAVELFLEERFKFIDIPKVIEAICEKHKCDLNLNPSLSEILEIDNWAREEVLDYSEKNIKKMQF.

Thr-10, Gly-11, Ser-12, Ile-13, Gly-36, Lys-37, Asn-38, and Asn-130 together coordinate NADPH. Position 131 (Lys-131) interacts with 1-deoxy-D-xylulose 5-phosphate. An NADPH-binding site is contributed by Glu-132. Asp-156 is a Mn(2+) binding site. Positions 157, 158, 194, and 217 each coordinate 1-deoxy-D-xylulose 5-phosphate. Glu-158 provides a ligand contact to Mn(2+). Gly-223 is an NADPH binding site. 1-deoxy-D-xylulose 5-phosphate is bound by residues Ser-230, Asn-235, Lys-236, and Glu-239. Glu-239 provides a ligand contact to Mn(2+).

The protein belongs to the DXR family. Mg(2+) serves as cofactor. Requires Mn(2+) as cofactor.

It catalyses the reaction 2-C-methyl-D-erythritol 4-phosphate + NADP(+) = 1-deoxy-D-xylulose 5-phosphate + NADPH + H(+). The protein operates within isoprenoid biosynthesis; isopentenyl diphosphate biosynthesis via DXP pathway; isopentenyl diphosphate from 1-deoxy-D-xylulose 5-phosphate: step 1/6. Functionally, catalyzes the NADPH-dependent rearrangement and reduction of 1-deoxy-D-xylulose-5-phosphate (DXP) to 2-C-methyl-D-erythritol 4-phosphate (MEP). This chain is 1-deoxy-D-xylulose 5-phosphate reductoisomerase, found in Prochlorococcus marinus (strain NATL1A).